The primary structure comprises 390 residues: L-seryl-tRNA(Sec) selenium transferase (390 aa).

Lys-225 is modified (N6-(pyridoxal phosphate)lysine).

It belongs to the SelA family. The cofactor is pyridoxal 5'-phosphate.

It is found in the cytoplasm. The catalysed reaction is L-seryl-tRNA(Sec) + selenophosphate + H(+) = L-selenocysteinyl-tRNA(Sec) + phosphate. The protein operates within aminoacyl-tRNA biosynthesis; selenocysteinyl-tRNA(Sec) biosynthesis; selenocysteinyl-tRNA(Sec) from L-seryl-tRNA(Sec) (bacterial route): step 1/1. Functionally, converts seryl-tRNA(Sec) to selenocysteinyl-tRNA(Sec) required for selenoprotein biosynthesis. The sequence is that of L-seryl-tRNA(Sec) selenium transferase from Helicobacter pylori (strain J99 / ATCC 700824) (Campylobacter pylori J99).